A 313-amino-acid chain; its full sequence is Protein FixB (313 aa).

255–283 (LYLAVGISGQIQHMVGANASQTIFAINKD) serves as a coordination point for FAD.

It belongs to the ETF alpha-subunit/FixB family. In terms of assembly, heterodimer of FixA and FixB.

The protein operates within amine and polyamine metabolism; carnitine metabolism. Required for anaerobic carnitine reduction. May bring reductant to CaiA. This chain is Protein FixB, found in Shigella dysenteriae serotype 1 (strain Sd197).